The primary structure comprises 147 residues: Large ribosomal subunit protein bL9 (147 aa).

It belongs to the bacterial ribosomal protein bL9 family.

Binds to the 23S rRNA. The chain is Large ribosomal subunit protein bL9 from Caldanaerobacter subterraneus subsp. tengcongensis (strain DSM 15242 / JCM 11007 / NBRC 100824 / MB4) (Thermoanaerobacter tengcongensis).